We begin with the raw amino-acid sequence, 218 residues long: Large ribosomal subunit protein uL3 (218 aa).

Belongs to the universal ribosomal protein uL3 family. Part of the 50S ribosomal subunit. Forms a cluster with proteins L14 and L19.

Functionally, one of the primary rRNA binding proteins, it binds directly near the 3'-end of the 23S rRNA, where it nucleates assembly of the 50S subunit. In Mycolicibacterium gilvum (strain PYR-GCK) (Mycobacterium gilvum (strain PYR-GCK)), this protein is Large ribosomal subunit protein uL3.